The chain runs to 358 residues: 3-isopropylmalate dehydrogenase (358 aa).

79–92 (GPKWEHLPPDEQPE) serves as a coordination point for NAD(+). Positions 100, 110, 139, and 227 each coordinate substrate. Mg(2+) contacts are provided by D227, D251, and D255. 285–297 (GSAPDIAGKGVAN) contributes to the NAD(+) binding site.

The protein belongs to the isocitrate and isopropylmalate dehydrogenases family. LeuB type 1 subfamily. As to quaternary structure, homodimer. Mg(2+) is required as a cofactor. Mn(2+) serves as cofactor.

The protein resides in the cytoplasm. It carries out the reaction (2R,3S)-3-isopropylmalate + NAD(+) = 4-methyl-2-oxopentanoate + CO2 + NADH. It participates in amino-acid biosynthesis; L-leucine biosynthesis; L-leucine from 3-methyl-2-oxobutanoate: step 3/4. Catalyzes the oxidation of 3-carboxy-2-hydroxy-4-methylpentanoate (3-isopropylmalate) to 3-carboxy-4-methyl-2-oxopentanoate. The product decarboxylates to 4-methyl-2 oxopentanoate. The protein is 3-isopropylmalate dehydrogenase of Pseudoalteromonas translucida (strain TAC 125).